The sequence spans 603 residues: UvrABC system protein C (603 aa).

In terms of domain architecture, GIY-YIG spans 13–92 (NGPGVYLMKD…IRKHKPRYNI (80 aa)). The UVR domain occupies 202–237 (NDLLQKIKEQMAAASERQEYELAARLRDRMFAIQAT).

It belongs to the UvrC family. In terms of assembly, interacts with UvrB in an incision complex.

The protein resides in the cytoplasm. In terms of biological role, the UvrABC repair system catalyzes the recognition and processing of DNA lesions. UvrC both incises the 5' and 3' sides of the lesion. The N-terminal half is responsible for the 3' incision and the C-terminal half is responsible for the 5' incision. This chain is UvrABC system protein C, found in Desulfatibacillum aliphaticivorans.